The following is a 25-amino-acid chain: Caerin-1.6 (25 aa).

Leu25 is subject to Leucine amide.

It belongs to the frog skin active peptide (FSAP) family. Caerin subfamily. Expressed by the skin dorsal glands.

The protein localises to the secreted. Functionally, antimicrobial peptide. Adopts an alpha helical conformation which can disrupt bacterial membranes. Strongly inhibits the formation of NO by neuronal nitric oxide synthase (nNOS) at micromolar concentrations. Acts by a non-competitive mechanism, probably by binding to calcium/calmodulin and as a consequence blocking calmodulin attachment to nNOS. In terms of biological role, does not show antimicrobial activity. The protein is Caerin-1.6 of Ranoidea chloris (Red-eyed tree frog).